The primary structure comprises 245 residues: 1-(5-phosphoribosyl)-5-[(5-phosphoribosylamino)methylideneamino] imidazole-4-carboxamide isomerase (245 aa).

D8 acts as the Proton acceptor in catalysis. The Proton donor role is filled by D130.

This sequence belongs to the HisA/HisF family.

Its subcellular location is the cytoplasm. The catalysed reaction is 1-(5-phospho-beta-D-ribosyl)-5-[(5-phospho-beta-D-ribosylamino)methylideneamino]imidazole-4-carboxamide = 5-[(5-phospho-1-deoxy-D-ribulos-1-ylimino)methylamino]-1-(5-phospho-beta-D-ribosyl)imidazole-4-carboxamide. The protein operates within amino-acid biosynthesis; L-histidine biosynthesis; L-histidine from 5-phospho-alpha-D-ribose 1-diphosphate: step 4/9. The chain is 1-(5-phosphoribosyl)-5-[(5-phosphoribosylamino)methylideneamino] imidazole-4-carboxamide isomerase from Pseudomonas putida (strain ATCC 700007 / DSM 6899 / JCM 31910 / BCRC 17059 / LMG 24140 / F1).